A 243-amino-acid polypeptide reads, in one-letter code: Adenylate dimethylallyltransferase (243 aa).

The protein belongs to the isopentenyl transferase family.

It catalyses the reaction dimethylallyl diphosphate + AMP = N(6)-(dimethylallyl)adenosine 5'-phosphate + diphosphate. Its function is as follows. Transfers dimethylallyl groups to AMP as part of the biosynthesis of cytokinin phytohormones. This is Adenylate dimethylallyltransferase (tzs) from Rhizobium rhizogenes (Agrobacterium rhizogenes).